The primary structure comprises 535 residues: Probable bifunctional tRNA threonylcarbamoyladenosine biosynthesis protein (535 aa).

Residues 1 to 323 (MICLGLEGTA…YRTDMVEVNW (323 aa)) form a kae1 region. Residues H106, H110, and Y127 each coordinate Fe cation. Residues 127 to 131 (YVSGG), D159, G172, E176, and N256 contribute to the L-threonylcarbamoyladenylate site. D284 contributes to the Fe cation binding site. Positions 333 to 535 (KIPEHLIGKG…DVERRARYVE (203 aa)) constitute a Protein kinase domain. Residues 339-347 (IGKGAEADI) and K360 each bind ATP. The active-site Proton acceptor; for kinase activity is the D451.

It in the N-terminal section; belongs to the KAE1 / TsaD family. The protein in the C-terminal section; belongs to the protein kinase superfamily. Tyr protein kinase family. BUD32 subfamily. As to quaternary structure, component of the KEOPS complex that consists of Kae1, Bud32, Cgi121 and Pcc1; the whole complex dimerizes. Requires Fe(2+) as cofactor.

It localises to the cytoplasm. The enzyme catalyses L-seryl-[protein] + ATP = O-phospho-L-seryl-[protein] + ADP + H(+). It catalyses the reaction L-threonyl-[protein] + ATP = O-phospho-L-threonyl-[protein] + ADP + H(+). The catalysed reaction is L-threonylcarbamoyladenylate + adenosine(37) in tRNA = N(6)-L-threonylcarbamoyladenosine(37) in tRNA + AMP + H(+). Activity provided by the Kae1 region seems to be regulated via phosphorylation by the protein kinase Bud32, which is itself activated by Cgi121. Its function is as follows. Required for the formation of a threonylcarbamoyl group on adenosine at position 37 (t(6)A37) in tRNAs that read codons beginning with adenine. Is a component of the KEOPS complex that is probably involved in the transfer of the threonylcarbamoyl moiety of threonylcarbamoyl-AMP (TC-AMP) to the N6 group of A37. The Kae1 domain likely plays a direct catalytic role in this reaction. The Bud32 domain probably displays kinase activity that regulates Kae1 function. In vitro, exhibits low ATPase activity, but does not bind DNA and does not have endonuclease activity. In Methanocaldococcus jannaschii (strain ATCC 43067 / DSM 2661 / JAL-1 / JCM 10045 / NBRC 100440) (Methanococcus jannaschii), this protein is Probable bifunctional tRNA threonylcarbamoyladenosine biosynthesis protein.